Here is a 106-residue protein sequence, read N- to C-terminus: uncharacterized protein (106 aa).

This is an uncharacterized protein from Schizosaccharomyces pombe (strain 972 / ATCC 24843) (Fission yeast).